The sequence spans 947 residues: Pyruvate, phosphate dikinase 1, chloroplastic (947 aa).

Residues 1-62 (MAASVSRAIC…GRGQHCSPLR (62 aa)) constitute a chloroplast transit peptide. The disordered stretch occupies residues 21–54 (DREATSFARRSVAAPRPPHAKAAGVIRSDSGAGR). Residue Ala63 is modified to N-acetylalanine; partial. Position 309 is a phosphothreonine (Thr309). Ser506 carries the post-translational modification Phosphoserine. Position 527 is a phosphothreonine; by PDRP1 (Thr527). At Ser528 the chain carries Phosphoserine; by PDRP1. The active-site Tele-phosphohistidine intermediate is the His529. Residues Arg635, Arg692, Glu821, Gly842, Thr843, Asn844, and Asp845 each coordinate substrate. Glu821 provides a ligand contact to Mg(2+). Asp845 is a binding site for Mg(2+). Residue Cys907 is the Proton donor of the active site.

It belongs to the PEP-utilizing enzyme family. In terms of assembly, homotetramer. It depends on Mg(2+) as a cofactor. Post-translationally, phosphorylation of Thr-527 in the dark inactivates the enzyme, dephosphorylation upon light stimulation reactivates the enzyme. More highly phosphorylated when grown under high rather than low light regimes (70 vs 900 umol photons/m-2/s). the degree of phosphorylation is strictly regulated by light intensity and the light/dark transition has no influence. Phosphorylated in both mesophyll and bundle sheath cells. The phosphorylation at Ser-528 may be important for the phosphorylation at Thr-527 and may also be regulated by light intensity. Isoform C4PPDKZM1 mainly localized in mesophyll cells and only a low level is found in bundle sheath cells. Isoform CYPPDKZM1 expressed in roots, stems and etiolated leaves.

It is found in the plastid. The protein resides in the chloroplast. The protein localises to the cytoplasm. The catalysed reaction is pyruvate + phosphate + ATP = phosphoenolpyruvate + AMP + diphosphate + H(+). It participates in photosynthesis; C4 acid pathway. Activated by light-induced dephosphorylation. Inhibited by dark-induced phosphorylation. Both reactions are catalyzed by PDRP1. Inactivated by cold due to the dissociation of the homotetramer. Independent of circadian regulation. Functionally, formation of phosphoenolpyruvate, which is the primary acceptor of CO(2) in C4 and some Crassulacean acid metabolism plants. The sequence is that of Pyruvate, phosphate dikinase 1, chloroplastic from Zea mays (Maize).